Consider the following 310-residue polypeptide: Apolipoprotein E (310 aa).

The signal sequence occupies residues 1-18; the sequence is MKVLWAALVVTLLAGCGA. 8 tandem repeats follow at residues 77–98, 99–120, 121–142, 143–164, 165–186, 187–208, 209–226, and 227–248. The 8 X 22 AA approximate tandem repeats stretch occupies residues 77–248; it reads ALMDDTMKEV…RLDEVREQVQ (172 aa). An LDL and other lipoprotein receptors binding region spans residues 155–165; sequence HLRKMRKRLLR. 159-162 is a binding site for heparin; it reads MRKR. The segment at 207 to 283 is lipid-binding and lipoprotein association; it reads HTLVSKPLQE…SWFEPLVQDM (77 aa). 222–229 provides a ligand contact to heparin; the sequence is AQRLRGRL. Residues 259–310 form a homooligomerization region; sequence NQVRLQAEAFQGRLKSWFEPLVQDMQQKWAELVEKVQLAVGAVPTSVPSEKQ. The tract at residues 271-283 is specificity for association with VLDL; that stretch reads RLKSWFEPLVQDM.

This sequence belongs to the apolipoprotein A1/A4/E family. Homotetramer. May interact with ABCA1; functionally associated with ABCA1 in the biogenesis of HDLs. May interact with APP/A4 amyloid-beta peptide; the interaction is extremely stable in vitro but its physiological significance is unclear. May interact with MAPT. May interact with MAP2. In the cerebrospinal fluid, interacts with secreted SORL1. Interacts with PMEL; this allows the loading of PMEL luminal fragment on ILVs to induce fibril nucleation. In terms of processing, APOE exists as multiple glycosylated and sialylated glycoforms within cells and in plasma. The extent of glycosylation and sialylation are tissue and context specific. Post-translationally, glycated in plasma VLDL. Phosphorylated by FAM20C in the extracellular medium.

The protein resides in the secreted. It is found in the extracellular space. The protein localises to the extracellular matrix. It localises to the extracellular vesicle. Its subcellular location is the endosome. The protein resides in the multivesicular body. Functionally, APOE is an apolipoprotein, a protein associating with lipid particles, that mainly functions in lipoprotein-mediated lipid transport between organs via the plasma and interstitial fluids. APOE is a core component of plasma lipoproteins and is involved in their production, conversion and clearance. Apolipoproteins are amphipathic molecules that interact both with lipids of the lipoprotein particle core and the aqueous environment of the plasma. As such, APOE associates with chylomicrons, chylomicron remnants, very low density lipoproteins (VLDL) and intermediate density lipoproteins (IDL) but shows a preferential binding to high-density lipoproteins (HDL). It also binds a wide range of cellular receptors including the LDL receptor/LDLR and the very low-density lipoprotein receptor/VLDLR that mediate the cellular uptake of the APOE-containing lipoprotein particles. Finally, APOE also has a heparin-binding activity and binds heparan-sulfate proteoglycans on the surface of cells, a property that supports the capture and the receptor-mediated uptake of APOE-containing lipoproteins by cells. This chain is Apolipoprotein E (APOE), found in Ceratotherium simum cottoni (Northern white rhinoceros).